A 376-amino-acid polypeptide reads, in one-letter code: Thymidine kinase (376 aa).

Residues 1-47 form a disordered region; that stretch reads MASHAGQQHAPAFGQAARASGPTDGRAASRPSHRQGASEARGDPELP. 56–63 provides a ligand contact to ATP; the sequence is GPHGVGKT. E84 (proton acceptor) is an active-site residue. Residues Y102 and Q126 each coordinate substrate. ATP is bound at residue R217. Residue R223 participates in substrate binding.

This sequence belongs to the herpesviridae thymidine kinase family. In terms of assembly, homodimer.

It carries out the reaction thymidine + ATP = dTMP + ADP + H(+). Catalyzes the transfer of the gamma-phospho group of ATP to thymidine to generate dTMP in the salvage pathway of pyrimidine synthesis. The dTMP serves as a substrate for DNA polymerase during viral DNA replication. Allows the virus to be reactivated and to grow in non-proliferative cells lacking a high concentration of phosphorylated nucleic acid precursors. This chain is Thymidine kinase, found in Human herpesvirus 2 (strain 333) (HHV-2).